A 319-amino-acid chain; its full sequence is MKTFLILALLAIVATTATTAVRVPVPQLQPQNPSQQQPQEQVPLVQQQQFPGQQQQFPPQQPYPQPQPFPSQQPYLQLQPFPQPQPFPPQLPYPQPQSFPPQQPYPQQQPQYLQPQQPISQQQAQQQQQQQQQQQQQQQILQQILQQQLIPCRDVVLQQHNIAHASSQVLQQSTYQLLQQLCCQQLLQIPEQSQCQAIHNVAHAIIMHQQQQQQQEQKQQLQQQQQQQQQLQQQQQQQQQQPSSQVSFQQPQQQYPSSQVSFQPSQLNPQAQGSVQPQQLPQFAEIRNLALQTLPAMCNVYIPPHCSTTIAPFGISGTN.

An N-terminal signal peptide occupies residues 1–20 (MKTFLILALLAIVATTATTA). A compositionally biased stretch (low complexity) spans 28–58 (LQPQNPSQQQPQEQVPLVQQQQFPGQQQQFP). Disordered stretches follow at residues 28-125 (LQPQ…QQAQ) and 258-278 (SQVSFQPSQLNPQAQGSVQPQ). Composition is skewed to pro residues over residues 59–71 (PQQPYPQPQPFPS) and 81–104 (FPQPQPFPPQLPYPQPQSFPPQQP). A compositionally biased stretch (low complexity) spans 105 to 125 (YPQQQPQYLQPQQPISQQQAQ). Residues 267 to 278 (LNPQAQGSVQPQ) show a composition bias toward polar residues.

The protein belongs to the gliadin/glutenin family. In terms of processing, substrate of transglutaminase.

In terms of biological role, gliadin is the major seed storage protein in wheat. This chain is Alpha/beta-gliadin A-V, found in Triticum aestivum (Wheat).